The primary structure comprises 325 residues: Oligopeptide transport system permease protein OppB (325 aa).

Helical transmembrane passes span Y12 to S32, L102 to I122, L135 to A155, L189 to S208, I248 to V268, and T290 to L310. Residues I95–S311 enclose the ABC transmembrane type-1 domain.

This sequence belongs to the binding-protein-dependent transport system permease family. OppBC subfamily. In terms of assembly, the complex is composed of an ATP-binding protein (OppD), two transmembrane proteins (OppB and OppC) and a solute-binding protein (OppA).

It is found in the cell inner membrane. Part of the ABC transporter complex OppABCD involved in the uptake of oligopeptides. Responsible for the translocation of the substrate across the membrane. This Mycobacterium bovis (strain ATCC BAA-935 / AF2122/97) protein is Oligopeptide transport system permease protein OppB.